A 727-amino-acid chain; its full sequence is ABC transporter G family member STR2 (727 aa).

Residues 1–475 (MKTQGLELET…NFTNIRRTPE (475 aa)) lie on the Cytoplasmic side of the membrane. In terms of domain architecture, ABC transporter spans 25–275 (LEFESLTYTV…LNRMGRKIPK (251 aa)). Residue 69–76 (GPSGAGKS) participates in ATP binding. A helical transmembrane segment spans residues 476-496 (LFLSRLMVLTFMGVMMATMFH). At 497-510 (NPKNTLQGITNRLS) the chain is on the extracellular side. A helical transmembrane segment spans residues 511 to 531 (FFIFTVCLFFFSSNDAVPAFI). At 532–559 (QERFIFIRETSHNAYRASCYTIASLITH) the chain is on the cytoplasmic side. The chain crosses the membrane as a helical span at residues 560-580 (MPFLALQALAYAAIVWFALEL). Residues 581 to 583 (RGP) are Extracellular-facing. Residues 584–604 (FIYFFLVLFISLLSTNSFVVF) traverse the membrane as a helical segment. Residues 605-612 (VSSIVPNY) lie on the Cytoplasmic side of the membrane. A helical membrane pass occupies residues 613–633 (ILGYAAVIAFTALFFLFCGYF). The Extracellular portion of the chain corresponds to 634-699 (LSSEDIPLYW…GTEEIKKRNN (66 aa)). Asparagine 667 is a glycosylation site (N-linked (GlcNAc...) asparagine). A helical transmembrane segment spans residues 700-720 (VLIMLGWAVLYRILFYIILRF). At 721–727 (ASKNQRS) the chain is on the cytoplasmic side.

It belongs to the ABC transporter superfamily. ABCG family. Stunted arbuscule (STR) subfamily. In terms of assembly, heterodimerizes with STR; the resulting transporter is located in the peri-arbuscular membrane. Expressed constitutively in the vascular tissue of roots.

Its subcellular location is the cell membrane. Functionally, together with STR, required for arbuscule development in arbuscular mycorrhizal symbiosis. This chain is ABC transporter G family member STR2, found in Medicago truncatula (Barrel medic).